A 307-amino-acid polypeptide reads, in one-letter code: Homoserine O-acetyltransferase (307 aa).

Cys142 functions as the Acyl-thioester intermediate in the catalytic mechanism. Substrate-binding residues include Lys163 and Ser192. Residue His235 is the Proton acceptor of the active site. Residue Glu237 is part of the active site. Residue Arg249 participates in substrate binding.

It belongs to the MetA family.

The protein resides in the cytoplasm. The enzyme catalyses L-homoserine + acetyl-CoA = O-acetyl-L-homoserine + CoA. It functions in the pathway amino-acid biosynthesis; L-methionine biosynthesis via de novo pathway; O-acetyl-L-homoserine from L-homoserine: step 1/1. In terms of biological role, transfers an acetyl group from acetyl-CoA to L-homoserine, forming acetyl-L-homoserine. The chain is Homoserine O-acetyltransferase from Desulfitobacterium hafniense (strain Y51).